The following is a 292-amino-acid chain: Tetratricopeptide repeat protein 1 (292 aa).

The segment at 20-125 (TDPQEAECLH…SSRLKEEGNE (106 aa)) is disordered. 2 stretches are compositionally biased toward basic and acidic residues: residues 36 to 49 (KEQH…KDVD) and 75 to 85 (GADKLENKPED). Residues 86–98 (DMNPSELDEEYLM) are compositionally biased toward acidic residues. Ser90 carries the post-translational modification Phosphoserine. The segment covering 99–125 (ELEKNMPDEEKKRRREESSRLKEEGNE) has biased composition (basic and acidic residues). TPR repeat units lie at residues 116-149 (SSRL…CPSC), 155-188 (SVLF…NPSY), and 189-222 (IRAI…DPSV).

As to quaternary structure, interacts with the GAP domain of NF1. Interacts (via TPR repeats) with HSP90AA1 and HSPA8.

This chain is Tetratricopeptide repeat protein 1 (TTC1), found in Bos taurus (Bovine).